Here is a 162-residue protein sequence, read N- to C-terminus: Ecotin (162 aa).

The N-terminal stretch at 1 to 18 (MFVPAVVFAALASTSAWA) is a signal peptide. Cys-70 and Cys-107 are joined by a disulfide.

The protein belongs to the protease inhibitor I11 (ecotin) family. In terms of assembly, homodimer.

The protein resides in the periplasm. Its function is as follows. General inhibitor of pancreatic serine proteases: inhibits chymotrypsin, trypsin, elastases, factor X, kallikrein as well as a variety of other proteases. The polypeptide is Ecotin (Salmonella choleraesuis (strain SC-B67)).